A 183-amino-acid chain; its full sequence is NRR repressor homolog 1 (183 aa).

Disordered regions lie at residues 1–40 (MEGV…VVGG) and 66–183 (NGEE…PTDQ). A compositionally biased stretch (acidic residues) spans 31–40 (EEEEGAVVGG). Positions 70–79 (GAAGGDGDGA) are enriched in gly residues. Acidic residues predominate over residues 101–115 (FEFEEAAAGAGDDDA). Over residues 135 to 145 (AVEKRRTEKEA) the composition is skewed to basic and acidic residues. Residues 150 to 161 (AEDDDDEQEGGE) show a composition bias toward acidic residues. Residues 163 to 183 (VEGKEEHRPGRRVEAHGPTDQ) are compositionally biased toward basic and acidic residues.

This sequence belongs to the NPR1-interactor family. Interacts with NPR1/NH1. Interacts with NPR3/NH3.

The protein localises to the nucleus. In terms of biological role, binds to and represses NPR1/NH1-mediated transcriptional activation of LG2 in vitro. This chain is NRR repressor homolog 1, found in Oryza sativa subsp. japonica (Rice).